The following is a 127-amino-acid chain: MORF4 family-associated protein 1 (127 aa).

The tract at residues Glu-76–Cys-97 is disordered. The stretch at Arg-92–Ser-126 forms a coiled coil.

It belongs to the MORF4 family-associated protein family. In terms of assembly, found in a complex composed of MORF4L1, MRFAP1 and RB1. Interacts via its N-terminus with MORF4L1. Interacts with CSTB and MORF4L2.

It is found in the nucleus. The protein resides in the cytoplasm. The protein localises to the perinuclear region. The protein is MORF4 family-associated protein 1 of Bos taurus (Bovine).